Consider the following 265-residue polypeptide: Methylthioribulose-1-phosphate dehydratase (265 aa).

C116 lines the substrate pocket. Residues H134 and H136 each coordinate Zn(2+). Catalysis depends on E159, which acts as the Proton donor/acceptor. Zn(2+) is bound at residue H224.

It belongs to the aldolase class II family. MtnB subfamily. Zn(2+) is required as a cofactor.

Its subcellular location is the cytoplasm. It carries out the reaction 5-(methylsulfanyl)-D-ribulose 1-phosphate = 5-methylsulfanyl-2,3-dioxopentyl phosphate + H2O. It participates in amino-acid biosynthesis; L-methionine biosynthesis via salvage pathway; L-methionine from S-methyl-5-thio-alpha-D-ribose 1-phosphate: step 2/6. In terms of biological role, catalyzes the dehydration of methylthioribulose-1-phosphate (MTRu-1-P) into 2,3-diketo-5-methylthiopentyl-1-phosphate (DK-MTP-1-P). The polypeptide is Methylthioribulose-1-phosphate dehydratase (Debaryomyces hansenii (strain ATCC 36239 / CBS 767 / BCRC 21394 / JCM 1990 / NBRC 0083 / IGC 2968) (Yeast)).